The chain runs to 430 residues: Long-chain specific acyl-CoA dehydrogenase, mitochondrial (430 aa).

A mitochondrion-targeting transit peptide spans 1-30 (MAARLLRGSLRFLGGHCAARPLPALRCSHS). An N6-acetyllysine modification is found at lysine 42. Phosphoserine is present on residues serine 54 and serine 55. Residues lysine 66 and lysine 81 each carry the N6-acetyllysine; alternate modification. N6-succinyllysine; alternate occurs at positions 66 and 81. N6-acetyllysine occurs at positions 92 and 95. At lysine 165 the chain carries N6-succinyllysine. FAD-binding positions include 170–179 (IAMTELGAGS) and 203–205 (FIS). Serine 179 serves as a coordination point for substrate. 227-228 (AR) contributes to the substrate binding site. Lysine 240 carries the post-translational modification N6-succinyllysine. N6-acetyllysine; alternate occurs at positions 254 and 279. Residues lysine 254 and lysine 279 each carry the N6-succinyllysine; alternate modification. Substrate is bound by residues tyrosine 282 and 289 to 292 (PQER). The active-site Proton acceptor is glutamate 291. Arginine 317 is a binding site for FAD. Lysine 318 is modified (N6-acetyllysine). At lysine 322 the chain carries N6-acetyllysine; alternate. Lysine 322 carries the N6-succinyllysine; alternate modification. Residue glutamine 328 participates in FAD binding. Lysine 358 is modified (N6-acetyllysine). Serine 362 carries the post-translational modification Phosphoserine. FAD is bound at residue 385 to 389 (QLHGG). 412-413 (GG) contacts substrate. Position 414–416 (414–416 (TNE)) interacts with FAD.

This sequence belongs to the acyl-CoA dehydrogenase family. In terms of assembly, homotetramer. FAD is required as a cofactor. Acetylation at Lys-318 and Lys-322 in proximity of the cofactor-binding sites strongly reduces catalytic activity. These sites are deacetylated by SIRT3.

It is found in the mitochondrion matrix. It catalyses the reaction a long-chain 2,3-saturated fatty acyl-CoA + oxidized [electron-transfer flavoprotein] + H(+) = a long-chain (2E)-enoyl-CoA + reduced [electron-transfer flavoprotein]. It carries out the reaction hexanoyl-CoA + oxidized [electron-transfer flavoprotein] + H(+) = (2E)-hexenoyl-CoA + reduced [electron-transfer flavoprotein]. The catalysed reaction is octanoyl-CoA + oxidized [electron-transfer flavoprotein] + H(+) = (2E)-octenoyl-CoA + reduced [electron-transfer flavoprotein]. The enzyme catalyses decanoyl-CoA + oxidized [electron-transfer flavoprotein] + H(+) = (2E)-decenoyl-CoA + reduced [electron-transfer flavoprotein]. It catalyses the reaction dodecanoyl-CoA + oxidized [electron-transfer flavoprotein] + H(+) = (2E)-dodecenoyl-CoA + reduced [electron-transfer flavoprotein]. It carries out the reaction tetradecanoyl-CoA + oxidized [electron-transfer flavoprotein] + H(+) = (2E)-tetradecenoyl-CoA + reduced [electron-transfer flavoprotein]. The catalysed reaction is oxidized [electron-transfer flavoprotein] + hexadecanoyl-CoA + H(+) = (2E)-hexadecenoyl-CoA + reduced [electron-transfer flavoprotein]. The enzyme catalyses octadecanoyl-CoA + oxidized [electron-transfer flavoprotein] + H(+) = (2E)-octadecenoyl-CoA + reduced [electron-transfer flavoprotein]. It catalyses the reaction eicosanoyl-CoA + oxidized [electron-transfer flavoprotein] + H(+) = (2E)-eicosenoyl-CoA + reduced [electron-transfer flavoprotein]. It carries out the reaction docosanoyl-CoA + oxidized [electron-transfer flavoprotein] + H(+) = (2E)-docosenoyl-CoA + reduced [electron-transfer flavoprotein]. The catalysed reaction is tetracosanoyl-CoA + oxidized [electron-transfer flavoprotein] + H(+) = (2E)-tetracosenoyl-CoA + reduced [electron-transfer flavoprotein]. The enzyme catalyses (5E)-tetradecenoyl-CoA + oxidized [electron-transfer flavoprotein] + H(+) = (2E,5E)-tetradecadienoyl-CoA + reduced [electron-transfer flavoprotein]. It catalyses the reaction (5Z)-tetradecenoyl-CoA + oxidized [electron-transfer flavoprotein] + H(+) = (2E,5Z)-tetradecadienoyl-CoA + reduced [electron-transfer flavoprotein]. It carries out the reaction oxidized [electron-transfer flavoprotein] + (9Z)-octadecenoyl-CoA + H(+) = (2E,9Z)-octadecadienoyl-CoA + reduced [electron-transfer flavoprotein]. Its pathway is lipid metabolism; mitochondrial fatty acid beta-oxidation. Its function is as follows. Long-chain specific acyl-CoA dehydrogenase is one of the acyl-CoA dehydrogenases that catalyze the first step of mitochondrial fatty acid beta-oxidation, an aerobic process breaking down fatty acids into acetyl-CoA and allowing the production of energy from fats. The first step of fatty acid beta-oxidation consists in the removal of one hydrogen from C-2 and C-3 of the straight-chain fatty acyl-CoA thioester, resulting in the formation of trans-2-enoyl-CoA. Among the different mitochondrial acyl-CoA dehydrogenases, long-chain specific acyl-CoA dehydrogenase can act on saturated and unsaturated acyl-CoAs with 6 to 24 carbons with a preference for 8 to 18 carbons long primary chains. This chain is Long-chain specific acyl-CoA dehydrogenase, mitochondrial, found in Macaca fascicularis (Crab-eating macaque).